Reading from the N-terminus, the 332-residue chain is DNA-directed RNA polymerase subunit alpha (332 aa).

The alpha N-terminal domain (alpha-NTD) stretch occupies residues 1–231 (MVREKVTVST…DLFIPFLHME (231 aa)). The segment at 262-332 (LSLESLFIDQ…FALDLPKNLN (71 aa)) is alpha C-terminal domain (alpha-CTD).

It belongs to the RNA polymerase alpha chain family. In plastids the minimal PEP RNA polymerase catalytic core is composed of four subunits: alpha, beta, beta', and beta''. When a (nuclear-encoded) sigma factor is associated with the core the holoenzyme is formed, which can initiate transcription.

The protein resides in the plastid. It catalyses the reaction RNA(n) + a ribonucleoside 5'-triphosphate = RNA(n+1) + diphosphate. In terms of biological role, DNA-dependent RNA polymerase catalyzes the transcription of DNA into RNA using the four ribonucleoside triphosphates as substrates. The sequence is that of DNA-directed RNA polymerase subunit alpha from Cuscuta japonica (Japanese dodder).